A 339-amino-acid polypeptide reads, in one-letter code: EEIG family member 2 (339 aa).

Residues 1 to 111 (MRLLDGGSFT…ILKVLISMQL (111 aa)) enclose the C2 NT-type domain. The residue at position 197 (Ser-197) is a Phosphoserine. The disordered stretch occupies residues 226–262 (TEPITAEPSPDPTAAAATATTTTAKEEEASEKLARCP). Positions 230–248 (TAEPSPDPTAAAATATTTT) are enriched in low complexity. Positions 249 to 259 (AKEEEASEKLA) are enriched in basic and acidic residues. 5 positions are modified to phosphoserine: Ser-255, Ser-267, Ser-299, Ser-300, and Ser-329.

Belongs to the EEIG family. Expressed in bone marrow-derived macrophages.

This Mus musculus (Mouse) protein is EEIG family member 2 (Eeig2).